Reading from the N-terminus, the 94-residue chain is Co-chaperonin GroES (94 aa).

This sequence belongs to the GroES chaperonin family. In terms of assembly, heptamer of 7 subunits arranged in a ring. Interacts with the chaperonin GroEL.

It localises to the cytoplasm. In terms of biological role, together with the chaperonin GroEL, plays an essential role in assisting protein folding. The GroEL-GroES system forms a nano-cage that allows encapsulation of the non-native substrate proteins and provides a physical environment optimized to promote and accelerate protein folding. GroES binds to the apical surface of the GroEL ring, thereby capping the opening of the GroEL channel. This chain is Co-chaperonin GroES, found in Bacillus cereus (strain ZK / E33L).